A 318-amino-acid polypeptide reads, in one-letter code: Protein RecA (318 aa).

53–60 (GPESSGKT) contributes to the ATP binding site.

It belongs to the RecA family.

The protein resides in the cytoplasm. Can catalyze the hydrolysis of ATP in the presence of single-stranded DNA, the ATP-dependent uptake of single-stranded DNA by duplex DNA, and the ATP-dependent hybridization of homologous single-stranded DNAs. It interacts with LexA causing its activation and leading to its autocatalytic cleavage. The protein is Protein RecA of Bacteroides fragilis (strain YCH46).